Here is a 509-residue protein sequence, read N- to C-terminus: ATP synthase subunit alpha (509 aa).

ATP is bound at residue 169 to 176; that stretch reads GDRQTGKT.

It belongs to the ATPase alpha/beta chains family. F-type ATPases have 2 components, CF(1) - the catalytic core - and CF(0) - the membrane proton channel. CF(1) has five subunits: alpha(3), beta(3), gamma(1), delta(1), epsilon(1). CF(0) has three main subunits: a(1), b(2) and c(9-12). The alpha and beta chains form an alternating ring which encloses part of the gamma chain. CF(1) is attached to CF(0) by a central stalk formed by the gamma and epsilon chains, while a peripheral stalk is formed by the delta and b chains.

The protein resides in the cell inner membrane. The catalysed reaction is ATP + H2O + 4 H(+)(in) = ADP + phosphate + 5 H(+)(out). Produces ATP from ADP in the presence of a proton gradient across the membrane. The alpha chain is a regulatory subunit. The protein is ATP synthase subunit alpha of Methylocella silvestris (strain DSM 15510 / CIP 108128 / LMG 27833 / NCIMB 13906 / BL2).